The following is a 124-amino-acid chain: Small ribosomal subunit protein uS12cz/uS12cy (124 aa).

This sequence belongs to the universal ribosomal protein uS12 family. As to quaternary structure, part of the 30S ribosomal subunit.

It is found in the plastid. The protein resides in the chloroplast. In terms of biological role, with S4 and S5 plays an important role in translational accuracy. Located at the interface of the 30S and 50S subunits. The chain is Small ribosomal subunit protein uS12cz/uS12cy (rps12-A) from Agrostis stolonifera (Creeping bentgrass).